Consider the following 420-residue polypeptide: MEVPPRLSHVPPPLFPSAPATLASRSLSHWRPRPPRQLAPLLPSLAPSSARQGARRAQRHVTAQQPSRLAGGAAIKGGRRRRPDLFRRHFKSSSIQRSAAAAAATRTARQHPPADSSVTMEDMNEYSNIEEFAEGSKINASKNQQDDGKMFIGGLSWDTSKKDLTEYLSRFGEVVDCTIKTDPVTGRSRGFGFVLFKDAASVDKVLELKEHKLDGKLIDPKRAKALKGKEPPKKVFVGGLSPDTSEEQIKEYFGAFGEIENIELPMDTKTNERRGFCFITYTDEEPVKKLLESRYHQIGSGKCEIKVAQPKEVYRQQQQQQKGGRGAAAGGRGGTRGRGRGQGQNWNQGFNNYYDQGYGNYNSAYGGDQNYSGYGGYDYTGYNYGNYGYGQGYADYSGQQSTYGKASRGGGNHQNNYQPY.

Disordered regions lie at residues 1 to 83 (MEVP…RRRP) and 96 to 120 (QRSA…SVTM). Arg25 is subject to Omega-N-methylarginine. The span at 36–52 (RQLAPLLPSLAPSSARQ) shows a compositional bias: low complexity. RRM domains are found at residues 148 to 230 (GKMF…KGKE) and 233 to 312 (KKVF…QPKE). Lys161 carries the N6-methyllysine modification. Lys209 participates in a covalent cross-link: Glycyl lysine isopeptide (Lys-Gly) (interchain with G-Cter in SUMO2). N6-acetyllysine is present on Lys216. Ser241 bears the Phosphoserine mark. Disordered regions lie at residues 313-348 (VYRQ…NWNQ) and 398-420 (GQQS…YQPY). The span at 323–342 (GGRGAAAGGRGGTRGRGRGQ) shows a compositional bias: gly residues. Residues 342 to 420 (QGQNWNQGFN…GNHQNNYQPY (79 aa)) form a necessary for interaction with TNPO1 region. Residues 396–420 (YSGQQSTYGKASRGGGNHQNNYQPY) form a necessary for its nuclear import and export region. Arg408 carries the post-translational modification Dimethylated arginine; alternate. Omega-N-methylarginine; alternate is present on Arg408.

As to quaternary structure, interacts with ZNF148. Interacts with TNPO1. Post-translationally, dimethylation of Arg-408 is probably of the asymmetric type. As to expression, expressed in heart, brain, placenta, lung, liver, skeletal muscle, kidney, pancreas, spleen, thymus, prostate, testis, ovary, small intestine, colon and leukocytes. Expressed in myeloid leukemia, gastric adenocarcinoma, cervical carcinoma, hepatoma, fibrosarcoma, colon adenocarcinoma, epidermoid carcinoma, osteosarcoma and urinary bladder carcinoma cells.

It localises to the nucleus. Its subcellular location is the cytoplasm. In terms of biological role, acts as a transcriptional regulator. Promotes transcription repression. Promotes transcription activation in differentiated myotubes. Binds to double- and single-stranded DNA sequences. Binds to the transcription suppressor CATR sequence of the COX5B promoter. Binds with high affinity to RNA molecules that contain AU-rich elements (AREs) found within the 3'-UTR of many proto-oncogenes and cytokine mRNAs. Binds both to nuclear and cytoplasmic poly(A) mRNAs. Binds to poly(G) and poly(A), but not to poly(U) or poly(C) RNA homopolymers. Binds to the 5'-ACUAGC-3' RNA consensus sequence. In Homo sapiens (Human), this protein is Heterogeneous nuclear ribonucleoprotein D-like (HNRNPDL).